We begin with the raw amino-acid sequence, 308 residues long: Porphobilinogen deaminase (308 aa).

Cys241 bears the S-(dipyrrolylmethanemethyl)cysteine mark.

The protein belongs to the HMBS family. Monomer. It depends on dipyrromethane as a cofactor.

The enzyme catalyses 4 porphobilinogen + H2O = hydroxymethylbilane + 4 NH4(+). It functions in the pathway porphyrin-containing compound metabolism; protoporphyrin-IX biosynthesis; coproporphyrinogen-III from 5-aminolevulinate: step 2/4. Functionally, tetrapolymerization of the monopyrrole PBG into the hydroxymethylbilane pre-uroporphyrinogen in several discrete steps. The sequence is that of Porphobilinogen deaminase from Staphylococcus aureus (strain Mu50 / ATCC 700699).